We begin with the raw amino-acid sequence, 101 residues long: Small ribosomal subunit protein uS14 (101 aa).

It belongs to the universal ribosomal protein uS14 family. Part of the 30S ribosomal subunit. Contacts proteins S3 and S10.

Its function is as follows. Binds 16S rRNA, required for the assembly of 30S particles and may also be responsible for determining the conformation of the 16S rRNA at the A site. The chain is Small ribosomal subunit protein uS14 from Sphingopyxis alaskensis (strain DSM 13593 / LMG 18877 / RB2256) (Sphingomonas alaskensis).